Consider the following 377-residue polypeptide: 4-hydroxy-3-methylbut-2-en-1-yl diphosphate synthase (flavodoxin) (377 aa).

[4Fe-4S] cluster is bound by residues Cys275, Cys278, Cys310, and Glu317.

Belongs to the IspG family. [4Fe-4S] cluster is required as a cofactor.

It catalyses the reaction (2E)-4-hydroxy-3-methylbut-2-enyl diphosphate + oxidized [flavodoxin] + H2O + 2 H(+) = 2-C-methyl-D-erythritol 2,4-cyclic diphosphate + reduced [flavodoxin]. Its pathway is isoprenoid biosynthesis; isopentenyl diphosphate biosynthesis via DXP pathway; isopentenyl diphosphate from 1-deoxy-D-xylulose 5-phosphate: step 5/6. In terms of biological role, converts 2C-methyl-D-erythritol 2,4-cyclodiphosphate (ME-2,4cPP) into 1-hydroxy-2-methyl-2-(E)-butenyl 4-diphosphate. This chain is 4-hydroxy-3-methylbut-2-en-1-yl diphosphate synthase (flavodoxin), found in Ruegeria sp. (strain TM1040) (Silicibacter sp.).